The primary structure comprises 1358 residues: Xanthine dehydrogenase/oxidase (1358 aa).

Residues 8 to 95 form the 2Fe-2S ferredoxin-type domain; that stretch reads DELVFFVNGK…HVAVTTVEGI (88 aa). [2Fe-2S] cluster is bound by residues Cys47, Cys52, Cys55, Cys77, Cys117, Cys120, Cys152, and Cys154. The FAD-binding PCMH-type domain maps to 255-440; that stretch reads FKGERVMWIQ…LSVEIPYSKE (186 aa). FAD is bound by residues 283-290, Phe363, 373-377, Asp386, Leu430, and Lys448; these read LVVGNTEV and ALGGN. Residues Gln796 and Phe827 each coordinate Mo-molybdopterin. Glu831 and Arg909 together coordinate substrate. Residue Arg941 participates in Mo-molybdopterin binding. Substrate-binding residues include Phe943 and Thr1039. Ala1108 contacts Mo-molybdopterin. Glu1290 functions as the Proton acceptor in the catalytic mechanism.

This sequence belongs to the xanthine dehydrogenase family. In terms of assembly, homodimer. It depends on FAD as a cofactor. The cofactor is Mo-molybdopterin. [2Fe-2S] cluster is required as a cofactor. As to expression, detected in liver (at protein level).

Its subcellular location is the peroxisome. It localises to the cytoplasm. It carries out the reaction xanthine + NAD(+) + H2O = urate + NADH + H(+). The enzyme catalyses hypoxanthine + NAD(+) + H2O = xanthine + NADH + H(+). It catalyses the reaction xanthine + O2 + H2O = urate + H2O2. In terms of biological role, key enzyme in purine degradation. Catalyzes the oxidation of hypoxanthine to xanthine. Catalyzes the oxidation of xanthine to uric acid. Contributes to the generation of reactive oxygen species. The chain is Xanthine dehydrogenase/oxidase (XDH) from Gallus gallus (Chicken).